We begin with the raw amino-acid sequence, 112 residues long: Putative pterin-4-alpha-carbinolamine dehydratase (112 aa).

Belongs to the pterin-4-alpha-carbinolamine dehydratase family.

It catalyses the reaction (4aS,6R)-4a-hydroxy-L-erythro-5,6,7,8-tetrahydrobiopterin = (6R)-L-erythro-6,7-dihydrobiopterin + H2O. This Shewanella sp. (strain MR-7) protein is Putative pterin-4-alpha-carbinolamine dehydratase.